Here is a 373-residue protein sequence, read N- to C-terminus: Homoserine O-acetyltransferase (373 aa).

Residues 46–355 (NAILICHPLT…NPNGHDSFLL (310 aa)) form the AB hydrolase-1 domain. The Nucleophile role is filled by S151. R221 lines the substrate pocket. Active-site residues include D317 and H350. Substrate is bound at residue D351.

The protein belongs to the AB hydrolase superfamily. MetX family. As to quaternary structure, homodimer.

Its subcellular location is the cytoplasm. The enzyme catalyses L-homoserine + acetyl-CoA = O-acetyl-L-homoserine + CoA. Its pathway is amino-acid biosynthesis; L-methionine biosynthesis via de novo pathway; O-acetyl-L-homoserine from L-homoserine: step 1/1. Transfers an acetyl group from acetyl-CoA to L-homoserine, forming acetyl-L-homoserine. This Zymomonas mobilis subsp. mobilis (strain ATCC 31821 / ZM4 / CP4) protein is Homoserine O-acetyltransferase.